The following is a 247-amino-acid chain: Glucosamine-6-phosphate deaminase (247 aa).

D67 functions as the Proton acceptor; for enolization step in the catalytic mechanism. N136 (for ring-opening step) is an active-site residue. The Proton acceptor; for ring-opening step role is filled by H138. The active-site For ring-opening step is the E143.

Belongs to the glucosamine/galactosamine-6-phosphate isomerase family. NagB subfamily.

It carries out the reaction alpha-D-glucosamine 6-phosphate + H2O = beta-D-fructose 6-phosphate + NH4(+). It participates in amino-sugar metabolism; N-acetylneuraminate degradation; D-fructose 6-phosphate from N-acetylneuraminate: step 5/5. Catalyzes the reversible isomerization-deamination of glucosamine 6-phosphate (GlcN6P) to form fructose 6-phosphate (Fru6P) and ammonium ion. The sequence is that of Glucosamine-6-phosphate deaminase from Shouchella clausii (strain KSM-K16) (Alkalihalobacillus clausii).